A 375-amino-acid polypeptide reads, in one-letter code: Putative F-box protein At1g12190 (375 aa).

Residues 1–46 (MACVKFPWELMEEILYRVPSLSLSRFKTVSKEWNTLLNDKTFIKKH) form the F-box domain.

The sequence is that of Putative F-box protein At1g12190 from Arabidopsis thaliana (Mouse-ear cress).